The primary structure comprises 284 residues: Formamidopyrimidine-DNA glycosylase (284 aa).

The Schiff-base intermediate with DNA role is filled by P2. The active-site Proton donor is E3. Catalysis depends on K58, which acts as the Proton donor; for beta-elimination activity. DNA contacts are provided by H97, R120, and R165. The segment at 250–284 adopts an FPG-type zinc-finger fold; it reads FVYDRAGEPCKVCGTPVRQIVQGQRSTFYCTHCQH. The active-site Proton donor; for delta-elimination activity is R274.

The protein belongs to the FPG family. In terms of assembly, monomer. Zn(2+) is required as a cofactor.

The enzyme catalyses Hydrolysis of DNA containing ring-opened 7-methylguanine residues, releasing 2,6-diamino-4-hydroxy-5-(N-methyl)formamidopyrimidine.. It carries out the reaction 2'-deoxyribonucleotide-(2'-deoxyribose 5'-phosphate)-2'-deoxyribonucleotide-DNA = a 3'-end 2'-deoxyribonucleotide-(2,3-dehydro-2,3-deoxyribose 5'-phosphate)-DNA + a 5'-end 5'-phospho-2'-deoxyribonucleoside-DNA + H(+). Functionally, involved in base excision repair of DNA damaged by oxidation or by mutagenic agents. Acts as a DNA glycosylase that recognizes and removes damaged bases. Has a preference for oxidized purines, such as 7,8-dihydro-8-oxoguanine (8-oxoG). Has AP (apurinic/apyrimidinic) lyase activity and introduces nicks in the DNA strand. Cleaves the DNA backbone by beta-delta elimination to generate a single-strand break at the site of the removed base with both 3'- and 5'-phosphates. This is Formamidopyrimidine-DNA glycosylase from Cupriavidus pinatubonensis (strain JMP 134 / LMG 1197) (Cupriavidus necator (strain JMP 134)).